Here is a 322-residue protein sequence, read N- to C-terminus: Cytochrome c biogenesis protein CcsA (322 aa).

The next 8 helical transmembrane spans lie at 9–29 (ILTH…LITL), 44–64 (GMIA…IYSG), 71–91 (LYES…VPYF), 98–118 (LTTI…SGLL), 143–163 (MILS…LLVI), 226–246 (VISL…VWAN), 253–273 (WSWD…AIYL), and 287–307 (AIVA…VNLL).

This sequence belongs to the CcmF/CycK/Ccl1/NrfE/CcsA family. May interact with Ccs1.

The protein localises to the plastid. Its subcellular location is the chloroplast thylakoid membrane. In terms of biological role, required during biogenesis of c-type cytochromes (cytochrome c6 and cytochrome f) at the step of heme attachment. This is Cytochrome c biogenesis protein CcsA from Helianthus annuus (Common sunflower).